The primary structure comprises 413 residues: uncharacterized protein (413 aa).

This is an uncharacterized protein from Mycobacterium tuberculosis (strain CDC 1551 / Oshkosh).